A 449-amino-acid polypeptide reads, in one-letter code: MSDIRHSLLRRDALSAAKEVLYHLDIYFSSQLQSAPLPIVDKGPVELLEEFVFQVPKERSAQPKRLNSLQELQLLEIMCNYFQEQTKDSVRQIIFSSLFSPQGNKADDSRMSLLGKLVSMAVAVCRIPVLECAASWLQRTPVVYCVRLAKALVDDYCCLVPGSIQTLKQIFSASPRFCCQFITSVTALYDLSSDDLIPPMDLLEMIVTWIFEDPRLILITFLNTPIAANLPIGFLELTPLVGLIRWCVKAPLAYKRKKKPPLSNGHVSNKVTKDPGVGMDRDSHLLYSKLHLSVLQVLMTLQLHLTEKNLYGRLGLILFDHMVPLVEEINRLADELNPLNASQEIELSLDRLAQALQVAMASGALLCTRDDLRTLCSRLPHNNLLQLVISGPVQQSPHAALPPGFYPHIHTPPLGYGAVPAHPAAHPALPTHPGHTFISGVTFPFRPIR.

The protein belongs to the Integrator subunit 15 family. In terms of assembly, component of the Integrator complex, composed of core subunits INTS1, INTS2, INTS3, INTS4, INTS5, INTS6, INTS7, INTS8, INTS9/RC74, INTS10, INTS11/CPSF3L, INTS12, INTS13, INTS14 and INTS15. The core complex associates with protein phosphatase 2A subunits PPP2CA and PPP2R1A, to form the Integrator-PP2A (INTAC) complex. INTS15 is part of the tail subcomplex, composed of INTS10, INTS13, INTS14 and INTS15.

The protein localises to the nucleus. The protein resides in the chromosome. Its function is as follows. Component of the integrator complex, a multiprotein complex that terminates RNA polymerase II (Pol II) transcription in the promoter-proximal region of genes. The integrator complex provides a quality checkpoint during transcription elongation by driving premature transcription termination of transcripts that are unfavorably configured for transcriptional elongation: the complex terminates transcription by (1) catalyzing dephosphorylation of the C-terminal domain (CTD) of Pol II subunit POLR2A/RPB1 and SUPT5H/SPT5, (2) degrading the exiting nascent RNA transcript via endonuclease activity and (3) promoting the release of Pol II from bound DNA. The integrator complex is also involved in terminating the synthesis of non-coding Pol II transcripts, such as enhancer RNAs (eRNAs), small nuclear RNAs (snRNAs), telomerase RNAs and long non-coding RNAs (lncRNAs). INTS15 is part of the integrator tail module that acts as a platform for the recruitment of transcription factors at promoters. Within the integrator complex, INTS15 is required to bridge different integrator modules. This chain is Integrator complex subunit 15, found in Homo sapiens (Human).